Reading from the N-terminus, the 427-residue chain is Transcobalamin-2 (427 aa).

An N-terminal signal peptide occupies residues 1–18 (MRHLGALLFLLGVLGALA). Intrachain disulfides connect C21–C267, C116–C309, and C165–C205. Residues Q104, 152 to 156 (TSYYQ), H190, 190 to 194 (HHSVD), N242, S245, Q291, and 395 to 397 (WQL) each bind cob(II)alamin.

Belongs to the eukaryotic cobalamin transport proteins family. In terms of assembly, interacts with CD320 (via LDL-receptor class A domains).

It is found in the secreted. Functionally, primary vitamin B12-binding and transport protein. Delivers cobalamin to cells. This chain is Transcobalamin-2 (TCN2), found in Pongo abelii (Sumatran orangutan).